We begin with the raw amino-acid sequence, 354 residues long: Selection and upkeep of intraepithelial T-cells protein 10 (354 aa).

Residues Met-1 to Ser-52 form the signal peptide. In terms of domain architecture, Ig-like V-type spans Leu-53–Val-141. At Leu-53–Lys-158 the chain is on the extracellular side. Cys-71 and Cys-125 are disulfide-bonded. An N-linked (GlcNAc...) asparagine glycan is attached at Asn-129. The helical transmembrane segment at Phe-159–Leu-179 threads the bilayer. Over Asp-180–Cys-209 the chain is Cytoplasmic. The helical transmembrane segment at Cys-210–Leu-230 threads the bilayer. Over Lys-231–Asp-252 the chain is Extracellular. A helical transmembrane segment spans residues Ile-253–Trp-273. The Cytoplasmic segment spans residues Thr-274 to Thr-354.

The protein belongs to the SKINT family. In terms of tissue distribution, expressed in skin and thymus.

Its subcellular location is the membrane. Functionally, may act by engaging a cell surface molecule on immature T-cells in the embryonic thymus. The chain is Selection and upkeep of intraepithelial T-cells protein 10 (Skint10) from Mus musculus (Mouse).